The chain runs to 192 residues: Shikimate kinase (192 aa).

26-31 (ASGKSS) contacts ATP. Ser-30 is a binding site for Mg(2+). Residues Asp-48, Arg-72, and Gly-94 each contribute to the substrate site. Arg-132 is a binding site for ATP. Arg-151 contacts substrate.

This sequence belongs to the shikimate kinase family. As to quaternary structure, monomer. It depends on Mg(2+) as a cofactor.

The protein localises to the cytoplasm. It carries out the reaction shikimate + ATP = 3-phosphoshikimate + ADP + H(+). It participates in metabolic intermediate biosynthesis; chorismate biosynthesis; chorismate from D-erythrose 4-phosphate and phosphoenolpyruvate: step 5/7. Functionally, catalyzes the specific phosphorylation of the 3-hydroxyl group of shikimic acid using ATP as a cosubstrate. The sequence is that of Shikimate kinase from Prochlorococcus marinus (strain MIT 9313).